We begin with the raw amino-acid sequence, 130 residues long: Small ribosomal subunit protein uS8 (130 aa).

This sequence belongs to the universal ribosomal protein uS8 family. In terms of assembly, part of the 30S ribosomal subunit. Contacts proteins S5 and S12.

One of the primary rRNA binding proteins, it binds directly to 16S rRNA central domain where it helps coordinate assembly of the platform of the 30S subunit. In Chromohalobacter salexigens (strain ATCC BAA-138 / DSM 3043 / CIP 106854 / NCIMB 13768 / 1H11), this protein is Small ribosomal subunit protein uS8.